A 258-amino-acid chain; its full sequence is Acetylglutamate kinase (258 aa).

Substrate contacts are provided by residues 41–42, R63, and N156; that span reads GG.

Belongs to the acetylglutamate kinase family. ArgB subfamily.

It localises to the cytoplasm. The catalysed reaction is N-acetyl-L-glutamate + ATP = N-acetyl-L-glutamyl 5-phosphate + ADP. It functions in the pathway amino-acid biosynthesis; L-arginine biosynthesis; N(2)-acetyl-L-ornithine from L-glutamate: step 2/4. Catalyzes the ATP-dependent phosphorylation of N-acetyl-L-glutamate. The polypeptide is Acetylglutamate kinase (Bacillus pumilus (strain SAFR-032)).